The following is a 351-amino-acid chain: 7,8-didemethyl-8-hydroxy-5-deazariboflavin synthase (351 aa).

Positions 35-275 constitute a Radical SAM core domain; that stretch reads ITYSKNAFIP…EDISIQVPPN (241 aa). [4Fe-4S] cluster is bound by residues cysteine 49, cysteine 53, and cysteine 56.

This sequence belongs to the radical SAM superfamily. CofG family. In terms of assembly, consists of two subunits, CofG and CofH. The cofactor is [4Fe-4S] cluster.

It carries out the reaction 5-amino-5-(4-hydroxybenzyl)-6-(D-ribitylimino)-5,6-dihydrouracil + S-adenosyl-L-methionine = 7,8-didemethyl-8-hydroxy-5-deazariboflavin + 5'-deoxyadenosine + L-methionine + NH4(+) + H(+). It participates in cofactor biosynthesis; coenzyme F0 biosynthesis. Functionally, catalyzes the radical-mediated synthesis of 7,8-didemethyl-8-hydroxy-5-deazariboflavin from 5-amino-5-(4-hydroxybenzyl)-6-(D-ribitylimino)-5,6-dihydrouracil. This is 7,8-didemethyl-8-hydroxy-5-deazariboflavin synthase from Methanococcus vannielii (strain ATCC 35089 / DSM 1224 / JCM 13029 / OCM 148 / SB).